The primary structure comprises 513 residues: Putative thymidine phosphorylase (513 aa).

The protein belongs to the thymidine/pyrimidine-nucleoside phosphorylase family. Type 2 subfamily.

It catalyses the reaction thymidine + phosphate = 2-deoxy-alpha-D-ribose 1-phosphate + thymine. In Bradyrhizobium diazoefficiens (strain JCM 10833 / BCRC 13528 / IAM 13628 / NBRC 14792 / USDA 110), this protein is Putative thymidine phosphorylase.